Here is a 257-residue protein sequence, read N- to C-terminus: MVIINTAAYHFVSITQPQTLADQIRAHGEIAGLKGTVLIANEGINLFLAGEKEAINAFYAWLCADVRFAALHVKYSVSAYKPFARFKVKVRPEIISFRRGDISPLQGRAPGVSAHTLRDWLRRGCDDNGRRLVMLDARNQQEIAYGTFSGAMTLPITKFTGFPGALAHYRDLLSDATVVSFCTGGIRCEKAVLWMRVDGMDNVLQLEGGILGYFEQVGGEGYDGRCFVFDKRVALDPQLRPLNDMRVVASFARSEIS.

In terms of domain architecture, Rhodanese spans 128 to 222 (NGRRLVMLDA…YFEQVGGEGY (95 aa)). Cysteine 182 (cysteine persulfide intermediate) is an active-site residue.

Belongs to the TrhO family.

The catalysed reaction is uridine(34) in tRNA + AH2 + O2 = 5-hydroxyuridine(34) in tRNA + A + H2O. Its function is as follows. Catalyzes oxygen-dependent 5-hydroxyuridine (ho5U) modification at position 34 in tRNAs. The chain is tRNA uridine(34) hydroxylase from Xylella fastidiosa (strain 9a5c).